Reading from the N-terminus, the 212-residue chain is MSEHPLPASVAATLEQGLASMGLDAALAPPLLRYLALLHRWNGTYNLTAIRDPQEMVTRHLLDSLAMQPFVADGSLADLGTGPGLPGIPLAIACPGLQVTLVESNGKKARFMREAVRQLGLGNARVAESRAEALDEAGRYDQLTARAMDTLAGIVRVGGHLLRPGGVLLAMKGVYPHEEIAELPAGWQVREVTPLSVPGLAGERHLVTVTGP.

S-adenosyl-L-methionine contacts are provided by residues G80, L85, 131–132 (AE), and R146.

The protein belongs to the methyltransferase superfamily. RNA methyltransferase RsmG family.

The protein resides in the cytoplasm. It carries out the reaction guanosine(527) in 16S rRNA + S-adenosyl-L-methionine = N(7)-methylguanosine(527) in 16S rRNA + S-adenosyl-L-homocysteine. Functionally, specifically methylates the N7 position of guanine in position 527 of 16S rRNA. In Stenotrophomonas maltophilia (strain K279a), this protein is Ribosomal RNA small subunit methyltransferase G.